The chain runs to 355 residues: Guanine nucleotide-binding protein G(z) subunit alpha (355 aa).

Basic and acidic residues predominate over residues 1–14; that stretch reads MGCRQSSEEKEAAR. The disordered stretch occupies residues 1–26; it reads MGCRQSSEEKEAARRSRRIDRHLRSE. A lipid anchor (N-myristoyl glycine) is attached at Gly2. Cys3 carries the S-palmitoyl cysteine lipid modification. In terms of domain architecture, G-alpha spans 32–355; it reads REIKLLLLGT…QNNLKYIGLC (324 aa). The tract at residues 35–48 is G1 motif; the sequence is KLLLLGTSNSGKST. GTP-binding positions include 40-47, 176-182, 201-205, 270-273, and Ala327; these read GTSNSGKS, LRSRDMT, DVGGQ, and NKKD. Position 47 (Ser47) interacts with Mg(2+). A G2 motif region spans residues 174 to 182; that stretch reads DILRSRDMT. Arg179 is subject to ADP-ribosylarginine; by cholera toxin. Thr182 contributes to the Mg(2+) binding site. The G3 motif stretch occupies residues 197–206; that stretch reads FKMVDVGGQR. A G4 motif region spans residues 266–273; sequence ILFLNKKD. Positions 325–330 are G5 motif; that stretch reads TCATDT.

The protein belongs to the G-alpha family. G(i/o/t/z) subfamily. G-proteins are composed of 3 units; alpha, beta and gamma. The alpha chain contains the guanine nucleotide binding site. Interacts with ADGRB2.

It is found in the membrane. Its function is as follows. Guanine nucleotide-binding proteins (G proteins) are involved as modulators or transducers in various transmembrane signaling systems. This Homo sapiens (Human) protein is Guanine nucleotide-binding protein G(z) subunit alpha (GNAZ).